The primary structure comprises 168 residues: Protein-export protein SecB (168 aa).

This sequence belongs to the SecB family. Homotetramer, a dimer of dimers. One homotetramer interacts with 1 SecA dimer.

Its subcellular location is the cytoplasm. In terms of biological role, one of the proteins required for the normal export of preproteins out of the cell cytoplasm. It is a molecular chaperone that binds to a subset of precursor proteins, maintaining them in a translocation-competent state. It also specifically binds to its receptor SecA. This is Protein-export protein SecB from Thioalkalivibrio sulfidiphilus (strain HL-EbGR7).